Here is a 132-residue protein sequence, read N- to C-terminus: MVTDNIADMLTRIRNANMVKHEIVEIPGTKMSKAIAEILKEEGFIENFETYTENSNQYLLLSLKYEGQSRERIINKIERVSKPGLRVYANSKTLPLVLNGLGIAIISTSKGVMTNRKAKSLGIGGEVLCYIW.

It belongs to the universal ribosomal protein uS8 family. As to quaternary structure, part of the 30S ribosomal subunit.

It localises to the plastid. It is found in the chloroplast. Its function is as follows. One of the primary rRNA binding proteins, it binds directly to 16S rRNA central domain where it helps coordinate assembly of the platform of the 30S subunit. This chain is Small ribosomal subunit protein uS8c (rps8), found in Thalassiosira pseudonana (Marine diatom).